The following is a 259-amino-acid chain: Protein CWC15 homolog (259 aa).

The disordered stretch occupies residues 1-182 (MTTAARPTFD…EKKQEDERIR (182 aa)). Over residues 52 to 71 (DENRNRDFRKELEEREREAR) the composition is skewed to basic and acidic residues. Composition is skewed to low complexity over residues 72 to 82 (SGTGATSSSSG) and 114 to 126 (QQQAQQAAQQQAA). Residues 129 to 150 (DADEPLDNDSSDSDSDSDDDDA) show a composition bias toward acidic residues. Residues 150–182 (AALLAELQKIKQERLQETARRESEKKQEDERIR) are a coiled coil. Positions 157–182 (QKIKQERLQETARRESEKKQEDERIR) are enriched in basic and acidic residues.

The protein belongs to the CWC15 family.

In terms of biological role, involved in pre-mRNA splicing. The sequence is that of Protein CWC15 homolog (c12.1) from Drosophila melanogaster (Fruit fly).